The sequence spans 295 residues: Acetylglutamate kinase (295 aa).

Residues 61–62 (GG), Arg83, and Asn182 contribute to the substrate site.

This sequence belongs to the acetylglutamate kinase family. ArgB subfamily.

The protein localises to the cytoplasm. It carries out the reaction N-acetyl-L-glutamate + ATP = N-acetyl-L-glutamyl 5-phosphate + ADP. Its pathway is amino-acid biosynthesis; L-arginine biosynthesis; N(2)-acetyl-L-ornithine from L-glutamate: step 2/4. Catalyzes the ATP-dependent phosphorylation of N-acetyl-L-glutamate. The polypeptide is Acetylglutamate kinase (Clostridium acetobutylicum (strain ATCC 824 / DSM 792 / JCM 1419 / IAM 19013 / LMG 5710 / NBRC 13948 / NRRL B-527 / VKM B-1787 / 2291 / W)).